A 536-amino-acid chain; its full sequence is Austinoid biosynthesis cluster protein W (536 aa).

The N-terminal stretch at 1-19 (MKHPTVALLGVGMLGCAAA) is a signal peptide. Disordered stretches follow at residues 141-164 (GSAP…PGFP), 185-220 (SLPG…PGFS), 261-302 (FGVP…ASNG), 385-423 (PGSA…ASNG), and 491-536 (PSPT…SSAE). Residues 195–208 (SGPSQAAAAPSTGD) are compositionally biased toward low complexity. The segment covering 209–220 (SGSGLPGSPGFS) has biased composition (gly residues). 2 stretches are compositionally biased toward low complexity: residues 287-302 (AGNA…ASNG) and 408-423 (AGNA…ASNG).

It functions in the pathway secondary metabolite biosynthesis; terpenoid biosynthesis. Part of the gene cluster that mediates the biosynthesis of calidodehydroaustin, a fungal meroterpenoid. The first step of the pathway is the synthesis of 3,5-dimethylorsellinic acid by the polyketide synthase ausA. 3,5-dimethylorsellinic acid is then prenylated by the polyprenyl transferase ausN. Further epoxidation by the FAD-dependent monooxygenase ausM and cyclization by the probable terpene cyclase ausL lead to the formation of protoaustinoid A. Protoaustinoid A is then oxidized to spiro-lactone preaustinoid A3 by the combined action of the FAD-binding monooxygenases ausB and ausC, and the dioxygenase ausE. Acid-catalyzed keto-rearrangement and ring contraction of the tetraketide portion of preaustinoid A3 by ausJ lead to the formation of preaustinoid A4. The aldo-keto reductase ausK, with the help of ausH, is involved in the next step by transforming preaustinoid A4 into isoaustinone which is in turn hydroxylated by the P450 monooxygenase ausI to form austinolide. The cytochrome P450 monooxygenase ausG modifies austinolide to austinol. Austinol is further acetylated to austin by the O-acetyltransferase ausP, which spontaneously changes to dehydroaustin. The cytochrome P450 monooxygenase ausR then converts dehydroaustin is into 7-dehydrodehydroaustin. The hydroxylation catalyzed by ausR permits the O-acetyltransferase ausQ to add an additional acetyl group to the molecule, leading to the formation of acetoxydehydroaustin. The short chain dehydrogenase ausT catalyzes the reduction of the double bond present between carbon atoms 1 and 2 to convert 7-dehydrodehydroaustin into 1,2-dihydro-7-hydroxydehydroaustin. AusQ catalyzes not only an acetylation reaction but also the addition of the PKS ausV diketide product to 1,2-dihydro-7-hydroxydehydroaustin, forming precalidodehydroaustin. Finally, the iron/alpha-ketoglutarate-dependent dioxygenase converts precalidodehydroaustin into calidodehydroaustin. This chain is Austinoid biosynthesis cluster protein W, found in Aspergillus calidoustus.